Consider the following 210-residue polypeptide: Glutathione S-transferase P (210 aa).

A GST N-terminal domain is found at 2–81 (PPYTIVYFPV…HLGRSLGLYG (80 aa)). A Phosphotyrosine; by EGFR modification is found at Tyr4. Glutathione-binding positions include Tyr8, Arg14, Trp39, Lys45, 52–53 (QL), and 65–66 (QS). Residues 83-204 (DQKEAALVDM…SSPDHVNRPI (122 aa)) form the GST C-terminal domain. Residues Lys103 and Lys116 each carry the N6-succinyllysine modification. Lys128 is subject to N6-acetyllysine.

The protein belongs to the GST superfamily. Pi family. As to quaternary structure, homodimer. Interacts with CDK5.

The protein resides in the cytoplasm. It is found in the mitochondrion. Its subcellular location is the nucleus. It carries out the reaction RX + glutathione = an S-substituted glutathione + a halide anion + H(+). It catalyses the reaction prostaglandin J2 + glutathione = prostaglandin J2-S-(R)-glutathione. The catalysed reaction is prostaglandin J2 + glutathione = prostaglandin J2-S-(S)-glutathione. The enzyme catalyses prostaglandin A2 + glutathione = prostaglandin A2-S-(S)-glutathione. It carries out the reaction 11(S)-hydroxy-14(S),15(S)-epoxy-(5Z,8Z,12E)-eicosatrienoate + glutathione = (11S,15S)-dihydroxy-14(R)-S-glutathionyl-(5Z,8Z,12E)-eicosatrienoate. Conjugation of reduced glutathione to a wide number of exogenous and endogenous hydrophobic electrophiles. Involved in the formation of glutathione conjugates of both prostaglandin A2 (PGA2) and prostaglandin J2 (PGJ2). Participates in the formation of novel hepoxilin regioisomers. Negatively regulates CDK5 activity via p25/p35 translocation to prevent neurodegeneration. The sequence is that of Glutathione S-transferase P (GSTP1) from Mesocricetus auratus (Golden hamster).